The following is a 546-amino-acid chain: Chaperonin GroEL 1 (546 aa).

Residues threonine 30–proline 33, lysine 51, aspartate 87–threonine 91, glycine 415, asparagine 479–alanine 481, and aspartate 495 contribute to the ATP site. The interval lysine 526–methionine 546 is disordered. Gly residues predominate over residues glycine 534–methionine 546.

The protein belongs to the chaperonin (HSP60) family. Forms a cylinder of 14 subunits composed of two heptameric rings stacked back-to-back. Interacts with the co-chaperonin GroES.

Its subcellular location is the cytoplasm. The enzyme catalyses ATP + H2O + a folded polypeptide = ADP + phosphate + an unfolded polypeptide.. Together with its co-chaperonin GroES, plays an essential role in assisting protein folding. The GroEL-GroES system forms a nano-cage that allows encapsulation of the non-native substrate proteins and provides a physical environment optimized to promote and accelerate protein folding. This is Chaperonin GroEL 1 from Burkholderia pseudomallei (strain K96243).